Here is an 894-residue protein sequence, read N- to C-terminus: Mitogen-activated protein kinase kinase kinase kinase 3 (894 aa).

Methionine 1 carries the N-acetylmethionine modification. Positions 16-273 (FELIQRIGSG…AEKLLQHPFV (258 aa)) constitute a Protein kinase domain. Residues 22–30 (IGSGTYGDV) and lysine 45 each bind ATP. The Proton acceptor role is filled by aspartate 136. Position 329 is a phosphoserine (serine 329). The segment at 339 to 358 (DPPLRKETEPHHELPDSDGF) is disordered. Over residues 340–353 (PPLRKETEPHHELP) the composition is skewed to basic and acidic residues. Serine 398 carries the phosphoserine modification. The disordered stretch occupies residues 408–537 (HVAHLEDDEG…VPKPISNGLP (130 aa)). Residues 473 to 487 (HVPPRPPPPRLPPQK) show a composition bias toward pro residues. A compositionally biased stretch (polar residues) spans 508–520 (LYQQQSEQRGTNL). The region spanning 556-867 (PLKIHCATSW…IFRLLGSDRV (312 aa)) is the CNH domain.

The protein belongs to the protein kinase superfamily. STE Ser/Thr protein kinase family. STE20 subfamily. Interacts with SH3GL2. Interaction appears to regulate MAP4K3-mediated JNK activation. Mg(2+) serves as cofactor.

The enzyme catalyses L-seryl-[protein] + ATP = O-phospho-L-seryl-[protein] + ADP + H(+). The catalysed reaction is L-threonyl-[protein] + ATP = O-phospho-L-threonyl-[protein] + ADP + H(+). Serine/threonine kinase that plays a role in the response to environmental stress. Appears to act upstream of the JUN N-terminal pathway. Activator of the Hippo signaling pathway which plays a pivotal role in organ size control and tumor suppression by restricting proliferation and promoting apoptosis. MAP4Ks act in parallel to and are partially redundant with STK3/MST2 and STK4/MST2 in the phosphorylation and activation of LATS1/2, and establish MAP4Ks as components of the expanded Hippo pathway. This is Mitogen-activated protein kinase kinase kinase kinase 3 (Map4k3) from Mus musculus (Mouse).